Consider the following 170-residue polypeptide: Small ribosomal subunit protein mS41 (170 aa).

A mitochondrion-targeting transit peptide spans 1-20 (MFRTLLSSTVRSIQLKPVTS).

The protein belongs to the mitochondrion-specific ribosomal protein mS41 family. As to quaternary structure, component of the mitochondrial small ribosomal subunit (mt-SSU).

Its subcellular location is the mitochondrion. Its function is as follows. Component of the mitochondrial ribosome (mitoribosome), a dedicated translation machinery responsible for the synthesis of mitochondrial genome-encoded proteins, including at least some of the essential transmembrane subunits of the mitochondrial respiratory chain. The mitoribosomes are attached to the mitochondrial inner membrane and translation products are cotranslationally integrated into the membrane. mS41 is involved in telomere length regulation. This chain is Small ribosomal subunit protein mS41 (FYV4), found in Candida albicans (strain SC5314 / ATCC MYA-2876) (Yeast).